The following is a 92-amino-acid chain: Protein EMB-1 (92 aa).

Composition is skewed to basic and acidic residues over residues 1–16 (MASQ…RARQ), 37–61 (AEGR…EMGR), and 72–92 (GGER…RTKK). The interval 1 to 92 (MASQQEKKEL…IDESKFRTKK (92 aa)) is disordered.

The protein belongs to the small hydrophilic plant seed protein family. As to expression, expressed in embryogenic cells, somatic embryos and seeds at the later stages of development. In the embryos, expressed in the procambium, the root and shoot meristem and the protoderm of the cotyledons. Not detected in the endosperm or the aleurone layer, in young leaves or roots.

It localises to the nucleus. The chain is Protein EMB-1 from Daucus carota (Wild carrot).